A 453-amino-acid polypeptide reads, in one-letter code: Chromosomal replication initiator protein DnaA (453 aa).

Positions 1 to 74 (MKEKQFWNRI…GFEIYDAEIT (74 aa)) are domain I, interacts with DnaA modulators. A domain II region spans residues 74–113 (TPHYIFTKPQDTTSSQVEEATNLTLYDYSPKLVSIPYSDT). Positions 114–331 (GLKEKYTFDN…GAINDITLIA (218 aa)) are domain III, AAA+ region. Positions 158, 160, 161, and 162 each coordinate ATP. Positions 332-453 (RVKKIKDITI…EIESIKKKIK (122 aa)) are domain IV, binds dsDNA.

This sequence belongs to the DnaA family. In terms of assembly, oligomerizes as a right-handed, spiral filament on DNA at oriC.

Its subcellular location is the cytoplasm. Functionally, plays an essential role in the initiation and regulation of chromosomal replication. ATP-DnaA binds to the origin of replication (oriC) to initiate formation of the DNA replication initiation complex once per cell cycle. Binds the DnaA box (a 9 base pair repeat at the origin) and separates the double-stranded (ds)DNA. Forms a right-handed helical filament on oriC DNA; dsDNA binds to the exterior of the filament while single-stranded (ss)DNA is stabiized in the filament's interior. The ATP-DnaA-oriC complex binds and stabilizes one strand of the AT-rich DNA unwinding element (DUE), permitting loading of DNA polymerase. After initiation quickly degrades to an ADP-DnaA complex that is not apt for DNA replication. Binds acidic phospholipids. In Streptococcus pneumoniae (strain Taiwan19F-14), this protein is Chromosomal replication initiator protein DnaA.